The following is a 128-amino-acid chain: Phosphoribosyl-AMP cyclohydrolase (128 aa).

Asp86 provides a ligand contact to Mg(2+). Residue Cys87 coordinates Zn(2+). Mg(2+) is bound by residues Asp88 and Asp90. Positions 103 and 110 each coordinate Zn(2+).

Belongs to the PRA-CH family. As to quaternary structure, homodimer. Requires Mg(2+) as cofactor. The cofactor is Zn(2+).

The protein localises to the cytoplasm. It carries out the reaction 1-(5-phospho-beta-D-ribosyl)-5'-AMP + H2O = 1-(5-phospho-beta-D-ribosyl)-5-[(5-phospho-beta-D-ribosylamino)methylideneamino]imidazole-4-carboxamide. It functions in the pathway amino-acid biosynthesis; L-histidine biosynthesis; L-histidine from 5-phospho-alpha-D-ribose 1-diphosphate: step 3/9. In terms of biological role, catalyzes the hydrolysis of the adenine ring of phosphoribosyl-AMP. The polypeptide is Phosphoribosyl-AMP cyclohydrolase (Roseobacter denitrificans (strain ATCC 33942 / OCh 114) (Erythrobacter sp. (strain OCh 114))).